The chain runs to 98 residues: PqqA binding protein (98 aa).

The protein belongs to the PqqD family. Monomer. Interacts with PqqE.

It participates in cofactor biosynthesis; pyrroloquinoline quinone biosynthesis. In terms of biological role, functions as a PqqA binding protein and presents PqqA to PqqE, in the pyrroloquinoline quinone (PQQ) biosynthetic pathway. This chain is PqqA binding protein, found in Rhizobium meliloti (strain 1021) (Ensifer meliloti).